The primary structure comprises 168 residues: Photosystem I assembly protein Ycf3 (168 aa).

3 TPR repeats span residues 35 to 68 (AFTYYRDGMSAQSEGNYAEALQNYYEAMRLEIDP), 72 to 105 (SYILYNIGLIHTSNGEHTKALEYYFRALERNPFL), and 120 to 153 (GEQAIRQGDSEIAEAWSDQAAEYWKQAIALTPGN).

It belongs to the Ycf3 family.

It is found in the plastid. Its subcellular location is the chloroplast thylakoid membrane. Its function is as follows. Essential for the assembly of the photosystem I (PSI) complex. May act as a chaperone-like factor to guide the assembly of the PSI subunits. The protein is Photosystem I assembly protein Ycf3 of Drimys granadensis.